The primary structure comprises 394 residues: Phloroisovalerophenone synthase (394 aa).

Residue Cys166 is part of the active site.

It belongs to the thiolase-like superfamily. Chalcone/stilbene synthases family. In terms of assembly, homodimer. In terms of tissue distribution, expressed in lupulin gland. Present at low levels in leaves but accumulates in cones.

It carries out the reaction 3-methylbutanoyl-CoA + 3 malonyl-CoA + 3 H(+) = phlorisovalerophenone + 3 CO2 + 4 CoA. It catalyses the reaction (E)-4-coumaroyl-CoA + 3 malonyl-CoA + 3 H(+) = 2',4,4',6'-tetrahydroxychalcone + 3 CO2 + 4 CoA. The enzyme catalyses 2-methylpropanoyl-CoA + 3 malonyl-CoA + 3 H(+) = phlorisobutanophenone + 3 CO2 + 4 CoA. The protein operates within secondary metabolite biosynthesis. In terms of biological role, involved in the biosynthesis of prenylated phenolics natural products which contribute to the bitter taste of beer and display broad biological activities. Polyketide synthase that can use 3-methylbutanoyl-CoA (isovaleryl-CoA) and 2-methylpropanoyl-CoA (isobutyryl-CoA) as substrates to produce phlorisovalerophenone (PIVP) and phlorisobutyrophenone (2-methyl-1-(2,4,6-trihydroxyphenyl)propan-1-one), respectively, intermediates in the biosynthesis of the bitter acids (alpha and beta) acids. Can also produce naringenin-chalcone (2',4,4',6'-tetrahydroxychalcone) from 4-coumaroyl-CoA with a lower efficiency. The sequence is that of Phloroisovalerophenone synthase from Humulus lupulus (European hop).